Reading from the N-terminus, the 170-residue chain is Mitotic-spindle organizing protein 2B (170 aa).

Disordered regions lie at residues 1–26 (MSRGQTEGSQAMASSQAAGPGPSPDA) and 102–170 (SADS…GSST). Positions 8-20 (GSQAMASSQAAGP) are enriched in low complexity. A compositionally biased stretch (polar residues) spans 123-132 (PNPTTSTTQG). Positions 151–170 (SGSRMQKSSSSGKSSGGSST) are enriched in low complexity.

Belongs to the MOZART2 family. In terms of assembly, part of the gamma-tubulin complex. Interacts with TUBG1.

It localises to the cytoplasm. The protein localises to the cytoskeleton. It is found in the microtubule organizing center. The protein resides in the centrosome. Its subcellular location is the spindle. This Xenopus tropicalis (Western clawed frog) protein is Mitotic-spindle organizing protein 2B (mzt2b).